Reading from the N-terminus, the 105-residue chain is Molt-inhibiting hormone (105 aa).

The signal sequence occupies residues 1–28 (MYRLAMRTWLAIVIVVVGTSLLFDTASA). Intrachain disulfides connect Cys35/Cys72, Cys52/Cys68, and Cys55/Cys81.

It belongs to the arthropod CHH/MIH/GIH/VIH hormone family. As to expression, produced by the medulla terminalis X-organ in the eyestalks and transported to the sinus gland where it is stored and released.

It localises to the secreted. Inhibits Y-organs where molting hormone (ecdysteroid) is secreted. A molting cycle is initiated when MIH secretion diminishes or stops. Has little or no hyperglycemic activity. The chain is Molt-inhibiting hormone from Penaeus japonicus (Kuruma prawn).